A 528-amino-acid polypeptide reads, in one-letter code: GTPase Der (528 aa).

Composition is skewed to acidic residues over residues 1-12 (MDVEGAFADEEE) and 30-62 (GYDDDFAPDDSDEDEDDDDYEFDEDDFAAPDFG). Residues 1–62 (MDVEGAFADE…EDDFAAPDFG (62 aa)) are disordered. 2 EngA-type G domains span residues 90 to 253 (CTVA…PEEP) and 263 to 436 (RRVA…ENWD). Residues 96–103 (GRPNVGKS), 143–147 (DTGGW), 205–208 (NKFD), 269–276 (GKPNVGKS), 316–320 (DTAGL), and 381–384 (NKWD) contribute to the GTP site. Positions 437–519 (RRVSTGQLNN…PIRIAVRVRE (83 aa)) constitute a KH-like domain.

Belongs to the TRAFAC class TrmE-Era-EngA-EngB-Septin-like GTPase superfamily. EngA (Der) GTPase family. Associates with the 50S ribosomal subunit.

Functionally, GTPase that plays an essential role in the late steps of ribosome biogenesis. The sequence is that of GTPase Der from Corynebacterium efficiens (strain DSM 44549 / YS-314 / AJ 12310 / JCM 11189 / NBRC 100395).